The following is a 1381-amino-acid chain: EH domain-containing and endocytosis protein 1 (1381 aa).

EH domains are found at residues 14 to 113 (EQAF…NPAP) and 135 to 227 (DIAK…IRLE). 2 consecutive EF-hand domains span residues 47-82 (LPGQ…IAQL) and 167-202 (LPNQ…IQLC). Ca(2+) contacts are provided by Asp180, Asp182, Ser184, and Glu191. At Thr238 the chain carries Phosphothreonine. Phosphoserine occurs at positions 241 and 244. Phosphothreonine is present on Thr245. Phosphoserine occurs at positions 248 and 249. Thr251 bears the Phosphothreonine mark. Position 265 is a phosphoserine (Ser265). The region spanning 276–311 (EKKQQFDAIFDSLDKQHAGSLSSAVLVPFFLSSRLN) is the EF-hand 3 domain. The EH 3 domain maps to 277-366 (KKQQFDAIFD…NELLQSPALG (90 aa)). Positions 389-535 (SKPSLQDMPH…SSPVKRTAST (147 aa)) are disordered. Composition is skewed to polar residues over residues 404–424 (AVNT…NGSL) and 432–447 (PSFS…TVVQ). A Phosphoserine modification is found at Ser419. Over residues 448–470 (NNTNNSFSYDNNNGQATLQQQQP) the composition is skewed to low complexity. A phosphothreonine mark is found at Thr450, Thr477, and Thr487. Residues 477–494 (THSSSGLKKFTPTSNFGQ) show a composition bias toward polar residues. Position 495 is a phosphoserine (Ser495). Residues 593 to 882 (GEASAQLSNA…RELSERQMNL (290 aa)) are a coiled coil. Residue Lys674 forms a Glycyl lysine isopeptide (Lys-Gly) (interchain with G-Cter in ubiquitin) linkage. Ser848 bears the Phosphoserine mark. A disordered region spans residues 898–919 (SASNTDTTTKEATSRGNVHEDT). Basic and acidic residues predominate over residues 905-919 (TTKEATSRGNVHEDT). Phosphoserine is present on residues Ser931, Ser950, Ser964, Ser1008, Ser1012, and Ser1020. 3 disordered regions span residues 933–1202 (LNVN…KDEF), 1214–1285 (VEED…QVSN), and 1298–1322 (SKAE…NDPI). The span at 937 to 957 (RVKDDEEKTERTESDVFDRDV) shows a compositional bias: basic and acidic residues. 2 stretches are compositionally biased toward polar residues: residues 960 to 989 (LGSQ…LTET) and 1005 to 1019 (RSQS…NAPQ). Over residues 1021–1036 (VRDDVELPETLEERDT) the composition is skewed to basic and acidic residues. Composition is skewed to polar residues over residues 1037–1049 (INNT…TGNL) and 1061–1073 (ATAS…NETT). At Thr1046 the chain carries Phosphothreonine. Phosphoserine occurs at positions 1069, 1087, 1093, 1095, 1096, and 1100. A compositionally biased stretch (polar residues) spans 1093–1103 (SVSSIQESPKI). Thr1111 carries the phosphothreonine modification. Residues 1127–1139 (SDSSSSDDDEFED) are compositionally biased toward acidic residues. Composition is skewed to polar residues over residues 1147–1164 (TVKT…SSLE) and 1178–1195 (TSPS…TNSI). 2 positions are modified to phosphoserine: Ser1181 and Ser1187. Positions 1214-1226 (VEEDNGADSESEF) are enriched in acidic residues. The segment at 1217–1381 (DNGADSESEF…AATNFLLDSA (165 aa)) is able to bind biological membranes. Polar residues predominate over residues 1253–1285 (NAFTGTLTSSSNPTIPKPQVQQQSTSDPAQVSN). Thr1307 carries the phosphothreonine modification. Lys1329 participates in a covalent cross-link: Glycyl lysine isopeptide (Lys-Gly) (interchain with G-Cter in ubiquitin). In terms of domain architecture, UBA spans 1338–1380 (ATTPKSLAVEELSGMGFTEEEAHNALEKCNWDLEAATNFLLDS). Ser1343 is subject to Phosphoserine.

The protein belongs to the VDP/USO1/EDE1 family. In terms of assembly, interacts (via UBA domain) with monoubiquitin and ENT1 (via asparagine-proline-phenylalanine tripeptide motif called NPF). Interacts with PAL1 and SYP1.

The protein localises to the cytoplasm. In terms of biological role, functions at the internalization step of the clathrin-mediated endocytosis (CME) as an early-acting scaffold protein. Requires clathrin adapter proteins, ENT1/2 and YAP1801/2, for normal spatiotemporal dynamics and viability. Binds to biological membranes in a ubiquitin-dependent manner. The sequence is that of EH domain-containing and endocytosis protein 1 (EDE1) from Saccharomyces cerevisiae (strain ATCC 204508 / S288c) (Baker's yeast).